A 135-amino-acid chain; its full sequence is Large ribosomal subunit protein uL16c (135 aa).

Belongs to the universal ribosomal protein uL16 family. As to quaternary structure, part of the 50S ribosomal subunit.

It is found in the plastid. Its subcellular location is the chloroplast. The protein is Large ribosomal subunit protein uL16c of Morus indica (Mulberry).